Here is a 346-residue protein sequence, read N- to C-terminus: Very-long-chain 3-oxoacyl-CoA reductase (346 aa).

A helical membrane pass occupies residues 19–39 (VLLGALLVGVFKLTVFILSVT). NADP(+) contacts are provided by Val-65, Asp-119, Asn-146, Tyr-220, Lys-224, Val-253, and Ser-255. The active-site Proton donor is the Tyr-220. Catalysis depends on Lys-224, which acts as the Lowers pKa of active site Tyr.

This sequence belongs to the short-chain dehydrogenases/reductases (SDR) family.

Its subcellular location is the endoplasmic reticulum membrane. The enzyme catalyses a very-long-chain (3R)-3-hydroxyacyl-CoA + NADP(+) = a very-long-chain 3-oxoacyl-CoA + NADPH + H(+). Its pathway is lipid metabolism; fatty acid biosynthesis. Functionally, component of the microsomal membrane bound fatty acid elongation system, which produces the 26-carbon very long-chain fatty acids (VLCFA) from palmitate. Catalyzes the reduction of the 3-ketoacyl-CoA intermediate that is formed in each cycle of fatty acid elongation. VLCFAs serve as precursors for ceramide and sphingolipids. This Scheffersomyces stipitis (strain ATCC 58785 / CBS 6054 / NBRC 10063 / NRRL Y-11545) (Yeast) protein is Very-long-chain 3-oxoacyl-CoA reductase.